Reading from the N-terminus, the 484-residue chain is Chromosomal replication initiator protein DnaA (484 aa).

Positions 1–83 (MQPPSQDWAS…LAWRTVWPGI (83 aa)) are domain I, interacts with DnaA modulators. The segment at 83-146 (IAEVKVSVRN…EKKAEGEDQN (64 aa)) is domain II. A disordered region spans residues 110-146 (GDQPRPLPKKPAKKKQSVPATPKSTSPEKKAEGEDQN). Residues 116–125 (LPKKPAKKKQ) are compositionally biased toward basic residues. Over residues 135–146 (SPEKKAEGEDQN) the composition is skewed to basic and acidic residues. The interval 147 to 364 (QFEERYNFDN…GALNRVVAYA (218 aa)) is domain III, AAA+ region. ATP contacts are provided by glycine 191, glycine 193, lysine 194, and threonine 195. The tract at residues 365–484 (TLSNRPINMD…VRLLMRQFEG (120 aa)) is domain IV, binds dsDNA.

It belongs to the DnaA family. As to quaternary structure, oligomerizes as a right-handed, spiral filament on DNA at oriC.

Its subcellular location is the cytoplasm. In terms of biological role, plays an essential role in the initiation and regulation of chromosomal replication. ATP-DnaA binds to the origin of replication (oriC) to initiate formation of the DNA replication initiation complex once per cell cycle. Binds the DnaA box (a 9 base pair repeat at the origin) and separates the double-stranded (ds)DNA. Forms a right-handed helical filament on oriC DNA; dsDNA binds to the exterior of the filament while single-stranded (ss)DNA is stabiized in the filament's interior. The ATP-DnaA-oriC complex binds and stabilizes one strand of the AT-rich DNA unwinding element (DUE), permitting loading of DNA polymerase. After initiation quickly degrades to an ADP-DnaA complex that is not apt for DNA replication. Binds acidic phospholipids. The sequence is that of Chromosomal replication initiator protein DnaA from Zymomonas mobilis subsp. mobilis (strain ATCC 31821 / ZM4 / CP4).